Consider the following 330-residue polypeptide: Protein RfbI (330 aa).

Residues 3 to 89 enclose the 2Fe-2S ferredoxin-type domain; sequence HIIKIFPSNI…ELNAHFFPEL (87 aa). 3 residues coordinate [2Fe-2S] cluster: Cys37, Cys42, and Cys45. Residues 94-192 form the FAD-binding FR-type domain; that stretch reads KKIVPCKVNS…EGPCGTFFIR (99 aa).

Requires [2Fe-2S] cluster as cofactor.

It functions in the pathway bacterial outer membrane biogenesis; LPS O-antigen biosynthesis. The chain is Protein RfbI (rfbI) from Salmonella typhimurium (strain LT2 / SGSC1412 / ATCC 700720).